The primary structure comprises 150 residues: Putative pre-16S rRNA nuclease (150 aa).

The protein belongs to the YqgF nuclease family.

It is found in the cytoplasm. In terms of biological role, could be a nuclease involved in processing of the 5'-end of pre-16S rRNA. In Protochlamydia amoebophila (strain UWE25), this protein is Putative pre-16S rRNA nuclease.